Here is a 728-residue protein sequence, read N- to C-terminus: Bacteriophytochrome (728 aa).

Cysteine 12 lines the a tetrapyrrole pocket. The chromophore binding domain stretch occupies residues 17–495 (IHVPGAIQPH…RLDLMELCLN (479 aa)). The GAF domain maps to 139–303 (DTASLLSNVT…IFSQVCSAIV (165 aa)). The Histidine kinase domain occupies 510 to 721 (VLGHDLRNPL…TFCLRLPVRQ (212 aa)). Phosphohistidine; by autocatalysis is present on histidine 513.

The protein in the N-terminal section; belongs to the phytochrome family. Contains one covalently linked tetrapyrrole chromophore.

The enzyme catalyses ATP + protein L-histidine = ADP + protein N-phospho-L-histidine.. In terms of biological role, photoreceptor which exists in two forms that are reversibly interconvertible by light: the R form that absorbs maximally in the red region of the spectrum and the FR form that absorbs maximally in the far-red region. The sequence is that of Bacteriophytochrome (bphP) from Pseudomonas aeruginosa (strain ATCC 15692 / DSM 22644 / CIP 104116 / JCM 14847 / LMG 12228 / 1C / PRS 101 / PAO1).